The sequence spans 613 residues: Arginine--tRNA ligase (613 aa).

Positions 123-133 (PNVAKPMHVGH) match the 'HIGH' region motif.

It belongs to the class-I aminoacyl-tRNA synthetase family. As to quaternary structure, monomer.

Its subcellular location is the cytoplasm. The enzyme catalyses tRNA(Arg) + L-arginine + ATP = L-arginyl-tRNA(Arg) + AMP + diphosphate. The sequence is that of Arginine--tRNA ligase from Caulobacter sp. (strain K31).